The chain runs to 939 residues: AP-2 complex subunit alpha (939 aa).

Residues 623–633 (RVPENEIRESK) show a composition bias toward basic and acidic residues. The segment at 623-660 (RVPENEIRESKSPAPTSGPGSVLQNNVHVNNSHSKLNN) is disordered. Residues 635 to 660 (PAPTSGPGSVLQNNVHVNNSHSKLNN) are compositionally biased toward polar residues.

The protein belongs to the adapter complexes large subunit family. In terms of assembly, adaptor protein complex 2 (AP-2) is a heterotetramer composed of two large adaptins (alpha-type and beta-type subunits), a medium adaptin (mu-type subunit AP50) and a small adaptin (sigma-type subunit AP17).

It is found in the cell membrane. It localises to the membrane. The protein resides in the coated pit. Adaptins are components of the adapter complexes which link clathrin to receptors in coated vesicles. Clathrin-associated protein complexes are believed to interact with the cytoplasmic tails of membrane proteins, leading to their selection and concentration. Alpha adaptin is a subunit of the plasma membrane adapter. The sequence is that of AP-2 complex subunit alpha from Drosophila pseudoobscura pseudoobscura (Fruit fly).